Here is a 496-residue protein sequence, read N- to C-terminus: MEPILQMKGISKKFGNVKVLDNVDLTLYRGRVLALLGENGAGKSTLMKILCGIYEKDEGSIYLKGKKVNIRNVRDAEKYGIAMIHQELNLVPSLSVAENIFLGREYVRTFNSIDWKKIKQESAKILHELGMDLNVDRLVKHLSVGEQQMVEIARSLLMNAEILVMDEPTAALTEGETRRLFEVIKRLRKEGKSIIYISHRMNEIFEICDDYIVLRDGCLISQGEISEVTRDDLVKMMVGRELKEHFPYECSSPGEEILRVENLTVKGMFEKVSFVVKKGEVVGFAGLIGAGRTEVAKTIFGFYKKTSGKIYLGGEEVKINSPRDAIEKGIMYLSEDRRNEGLIIKHTLKENMTLSALKKISDYIGTINFSKERSIVNEMIQKLNIKSFSPNQKIFRLSGGNQQKVAIAKCLLTNPKLIILDEPTRGIDVGAKNEIYKLINDLKRQGIGIILISSELPEVLNISDRIIVMHEGKITGEISREEATEEKVMLKAVGGE.

2 consecutive ABC transporter domains span residues 5-241 and 252-496; these read LQMK…VGRE and SPGE…VGGE. 37–44 provides a ligand contact to ATP; the sequence is GENGAGKS.

Belongs to the ABC transporter superfamily. Ribose importer (TC 3.A.1.2.1) family. As to quaternary structure, the complex is composed of an ATP-binding protein (RbsA), two transmembrane proteins (RbsC) and a solute-binding protein (RbsB).

The protein resides in the cell membrane. It catalyses the reaction D-ribose(out) + ATP + H2O = D-ribose(in) + ADP + phosphate + H(+). Functionally, part of the ABC transporter complex RbsABC involved in ribose import. Responsible for energy coupling to the transport system. The sequence is that of Ribose import ATP-binding protein RbsA from Caldanaerobacter subterraneus subsp. tengcongensis (strain DSM 15242 / JCM 11007 / NBRC 100824 / MB4) (Thermoanaerobacter tengcongensis).